A 227-amino-acid polypeptide reads, in one-letter code: Cytochrome c oxidase subunit 2 (227 aa).

Residues 1–14 (MAHPFQTGLQDATS) lie on the Mitochondrial intermembrane side of the membrane. Residues 15–45 (PIMEELLHFHDHTLMIVFLISSLVLYIISIM) form a helical membrane-spanning segment. At 46 to 59 (LTTKLTHTNTMDAQ) the chain is on the mitochondrial matrix side. A helical membrane pass occupies residues 60 to 87 (EVETVWTILPAIILIMIALPSLRILYMM). The Mitochondrial intermembrane segment spans residues 88–227 (DEINNPSLTV…YFEKWSASML (140 aa)). 6 residues coordinate Cu cation: H161, C196, E198, C200, H204, and M207. E198 provides a ligand contact to Mg(2+). The residue at position 218 (Y218) is a Phosphotyrosine.

Belongs to the cytochrome c oxidase subunit 2 family. In terms of assembly, component of the cytochrome c oxidase (complex IV, CIV), a multisubunit enzyme composed of 14 subunits. The complex is composed of a catalytic core of 3 subunits MT-CO1, MT-CO2 and MT-CO3, encoded in the mitochondrial DNA, and 11 supernumerary subunits COX4I, COX5A, COX5B, COX6A, COX6B, COX6C, COX7A, COX7B, COX7C, COX8 and NDUFA4, which are encoded in the nuclear genome. The complex exists as a monomer or a dimer and forms supercomplexes (SCs) in the inner mitochondrial membrane with NADH-ubiquinone oxidoreductase (complex I, CI) and ubiquinol-cytochrome c oxidoreductase (cytochrome b-c1 complex, complex III, CIII), resulting in different assemblies (supercomplex SCI(1)III(2)IV(1) and megacomplex MCI(2)III(2)IV(2)). Found in a complex with TMEM177, COA6, COX18, COX20, SCO1 and SCO2. Interacts with TMEM177 in a COX20-dependent manner. Interacts with COX20. Interacts with COX16. Requires Cu cation as cofactor.

The protein localises to the mitochondrion inner membrane. The enzyme catalyses 4 Fe(II)-[cytochrome c] + O2 + 8 H(+)(in) = 4 Fe(III)-[cytochrome c] + 2 H2O + 4 H(+)(out). Functionally, component of the cytochrome c oxidase, the last enzyme in the mitochondrial electron transport chain which drives oxidative phosphorylation. The respiratory chain contains 3 multisubunit complexes succinate dehydrogenase (complex II, CII), ubiquinol-cytochrome c oxidoreductase (cytochrome b-c1 complex, complex III, CIII) and cytochrome c oxidase (complex IV, CIV), that cooperate to transfer electrons derived from NADH and succinate to molecular oxygen, creating an electrochemical gradient over the inner membrane that drives transmembrane transport and the ATP synthase. Cytochrome c oxidase is the component of the respiratory chain that catalyzes the reduction of oxygen to water. Electrons originating from reduced cytochrome c in the intermembrane space (IMS) are transferred via the dinuclear copper A center (CU(A)) of subunit 2 and heme A of subunit 1 to the active site in subunit 1, a binuclear center (BNC) formed by heme A3 and copper B (CU(B)). The BNC reduces molecular oxygen to 2 water molecules using 4 electrons from cytochrome c in the IMS and 4 protons from the mitochondrial matrix. The chain is Cytochrome c oxidase subunit 2 (MT-CO2) from Ailuropoda melanoleuca (Giant panda).